Reading from the N-terminus, the 483-residue chain is Regulatory protein ViaA (483 aa).

This sequence belongs to the ViaA family. As to quaternary structure, homodimer. Interacts with RavA.

It is found in the cytoplasm. In terms of biological role, component of the RavA-ViaA chaperone complex, which may act on the membrane to optimize the function of some of the respiratory chains. ViaA stimulates the ATPase activity of RavA. This Salmonella heidelberg (strain SL476) protein is Regulatory protein ViaA.